We begin with the raw amino-acid sequence, 614 residues long: DNA double-strand break repair protein Mre11 (614 aa).

Positions 12, 14, 53, and 88 each coordinate Mn(2+). H89 functions as the Proton donor in the catalytic mechanism. Mn(2+)-binding residues include H158, D189, and H191. 2 disordered regions span residues 393-434 (ASPI…SPDI) and 487-614 (ALKK…GDYL). Over residues 411–425 (PVSSADSVSAVSPES) the composition is skewed to low complexity. Composition is skewed to basic and acidic residues over residues 487-502 (ALKK…REAP), 535-558 (VPEK…KETG), and 568-591 (GSEK…EKPV).

It belongs to the MRE11/RAD32 family. Homodimer. Forms a heterotetramer composed of two Mre11 subunits and two Rad50 subunits. The cofactor is Mn(2+).

Nuclease activity is regulated by Rad50. Functionally, part of the Rad50/Mre11 complex, which is involved in the early steps of DNA double-strand break (DSB) repair. The complex may facilitate opening of the processed DNA ends to aid in the recruitment of HerA and NurA. Mre11 binds to DSB ends and has both double-stranded 3'-5' exonuclease activity and single-stranded endonuclease activity. This chain is DNA double-strand break repair protein Mre11, found in Methanosarcina acetivorans (strain ATCC 35395 / DSM 2834 / JCM 12185 / C2A).